A 1663-amino-acid polypeptide reads, in one-letter code: TPR repeat-containing protein DDB_G0287407 (1663 aa).

2 disordered regions span residues 84–109 (RKTQ…QKGQ) and 326–359 (SEYS…NSNQ). Low complexity predominate over residues 89–105 (TSSNGSTSTTTTTTTTT). A compositionally biased stretch (acidic residues) spans 333–352 (DDGENDQSDDDDDNEDDDDF). TPR repeat units follow at residues 1110 to 1143 (SDVW…YINN), 1150 to 1183 (AKVD…YTKE), 1192 to 1225 (AITL…CESK), 1234 to 1269 (ADIA…TESK), 1278 to 1311 (ARIL…YEAR), and 1320 to 1353 (SQIL…TKKI). Disordered regions lie at residues 1500–1528 (VAQP…QQQR) and 1544–1571 (QKVS…RQNT). Residues 1516-1547 (RTQQAIQQGQQQRQQVQQQQQQVQQQMSQKVS) adopt a coiled-coil conformation. 2 stretches are compositionally biased toward low complexity: residues 1518 to 1528 (QQAIQQGQQQR) and 1544 to 1563 (QKVS…QPSQ).

This chain is TPR repeat-containing protein DDB_G0287407, found in Dictyostelium discoideum (Social amoeba).